Consider the following 242-residue polypeptide: Probable ABC transporter ATP-binding protein PEB1C (242 aa).

In terms of domain architecture, ABC transporter spans 2–236 (IELKNVNKYY…PKTERARLFL (235 aa)). 34–41 (GPSGSGKS) is a binding site for ATP.

Belongs to the ABC transporter superfamily.

It is found in the cell inner membrane. Functionally, most probably involved, with PEB1, in a binding-protein-dependent transport system for an amino acid. Probably responsible for energy coupling to the transport system. The sequence is that of Probable ABC transporter ATP-binding protein PEB1C (peb1C) from Campylobacter jejuni subsp. jejuni serotype O:23/36 (strain 81-176).